We begin with the raw amino-acid sequence, 149 residues long: Leghemoglobin (149 aa).

The 145-residue stretch at 3-147 folds into the Globin domain; it reads AFSEKQESLV…LAAAIKKAMG (145 aa). Residue tyrosine 31 is modified to Nitrated tyrosine. Serine 46 contacts heme b. Serine 46 bears the Phosphoserine mark. Position 62 (histidine 62) interacts with O2. Residues lysine 65, histidine 94, and lysine 97 each coordinate heme b. Nitrated tyrosine is present on tyrosine 135.

It belongs to the plant globin family. In terms of assembly, monomer. In terms of processing, nitrated in effective nodules and particularly in hypoxic conditions; this mechanism may play a protective role in the symbiosis by buffering toxic peroxynitrite NO(2)(-). Nitration level decrease during nodule senescence. Post-translationally, phosphorylation at Ser-46 disrupts the molecular environment of its porphyrin ring oxygen binding pocket, thus leading to a reduced oxygen consumption and to the delivery of oxygen O(2) to symbiosomes. Root nodules.

Its subcellular location is the cytoplasm. It localises to the cytosol. It is found in the nucleus. Functionally, leghemoglobin that reversibly binds oxygen O(2) through a pentacoordinated heme iron. In root nodules, facilitates the diffusion of oxygen to the bacteroids while preventing the bacterial nitrogenase from being inactivated by buffering dioxygen, nitric oxide and carbon monoxide, and promoting the formation of reactive oxygen species (ROS, e.g. H(2)O(2)). This role is essential for symbiotic nitrogen fixation (SNF). This is Leghemoglobin from Canavalia lineata (Beach bean).